The primary structure comprises 343 residues: D-erythrose-4-phosphate dehydrogenase (343 aa).

Arginine 12–isoleucine 13 is an NAD(+) binding site. Substrate-binding positions include serine 154–threonine 156, arginine 200, threonine 213–lysine 214, and arginine 236. Cysteine 155 acts as the Nucleophile in catalysis. Asparagine 318 contributes to the NAD(+) binding site.

It belongs to the glyceraldehyde-3-phosphate dehydrogenase family. Epd subfamily. In terms of assembly, homotetramer.

It localises to the cytoplasm. The catalysed reaction is D-erythrose 4-phosphate + NAD(+) + H2O = 4-phospho-D-erythronate + NADH + 2 H(+). Its pathway is cofactor biosynthesis; pyridoxine 5'-phosphate biosynthesis; pyridoxine 5'-phosphate from D-erythrose 4-phosphate: step 1/5. Its function is as follows. Catalyzes the NAD-dependent conversion of D-erythrose 4-phosphate to 4-phosphoerythronate. The polypeptide is D-erythrose-4-phosphate dehydrogenase (Pseudoalteromonas translucida (strain TAC 125)).